Here is a 163-residue protein sequence, read N- to C-terminus: Large ribosomal subunit protein uL11 (163 aa).

Positions 1–25 are disordered; that stretch reads MAGTIEVLVAGGQADPGPPLGPELG.

It belongs to the universal ribosomal protein uL11 family. Part of the ribosomal stalk of the 50S ribosomal subunit. Interacts with L10 and the large rRNA to form the base of the stalk. L10 forms an elongated spine to which L12 dimers bind in a sequential fashion forming a multimeric L10(L12)X complex.

Forms part of the ribosomal stalk which helps the ribosome interact with GTP-bound translation factors. This chain is Large ribosomal subunit protein uL11, found in Natronomonas pharaonis (strain ATCC 35678 / DSM 2160 / CIP 103997 / JCM 8858 / NBRC 14720 / NCIMB 2260 / Gabara) (Halobacterium pharaonis).